The primary structure comprises 407 residues: Arrestin homolog (407 aa).

It belongs to the arrestin family.

The protein is Arrestin homolog of Locusta migratoria (Migratory locust).